Reading from the N-terminus, the 663-residue chain is UvrABC system protein B (663 aa).

The Helicase ATP-binding domain maps to 26-414; the sequence is DGLESGLAKQ…DNVAEQVVRP (389 aa). 39–46 contacts ATP; it reads GVTGSGKT. The short motif at 92–115 is the Beta-hairpin element; that stretch reads YYDYYQPEAYVPASDTFIEKDASI. The 167-residue stretch at 430–596 folds into the Helicase C-terminal domain; that stretch reads QVDDLMSEIR…GINKSVEDIL (167 aa). The 36-residue stretch at 624–659 folds into the UVR domain; that stretch reads VKQINALEKQMYSHAQNMEFELAAKIRDEYLLLKEQ.

The protein belongs to the UvrB family. Forms a heterotetramer with UvrA during the search for lesions. Interacts with UvrC in an incision complex.

The protein resides in the cytoplasm. The UvrABC repair system catalyzes the recognition and processing of DNA lesions. A damage recognition complex composed of 2 UvrA and 2 UvrB subunits scans DNA for abnormalities. Upon binding of the UvrA(2)B(2) complex to a putative damaged site, the DNA wraps around one UvrB monomer. DNA wrap is dependent on ATP binding by UvrB and probably causes local melting of the DNA helix, facilitating insertion of UvrB beta-hairpin between the DNA strands. Then UvrB probes one DNA strand for the presence of a lesion. If a lesion is found the UvrA subunits dissociate and the UvrB-DNA preincision complex is formed. This complex is subsequently bound by UvrC and the second UvrB is released. If no lesion is found, the DNA wraps around the other UvrB subunit that will check the other stand for damage. The chain is UvrABC system protein B from Legionella pneumophila subsp. pneumophila (strain Philadelphia 1 / ATCC 33152 / DSM 7513).